The following is a 469-amino-acid chain: 3-isopropylmalate dehydratase large subunit (469 aa).

Residues Cys347, Cys407, and Cys410 each contribute to the [4Fe-4S] cluster site.

This sequence belongs to the aconitase/IPM isomerase family. LeuC type 1 subfamily. Heterodimer of LeuC and LeuD. [4Fe-4S] cluster serves as cofactor.

The enzyme catalyses (2R,3S)-3-isopropylmalate = (2S)-2-isopropylmalate. Its pathway is amino-acid biosynthesis; L-leucine biosynthesis; L-leucine from 3-methyl-2-oxobutanoate: step 2/4. Its function is as follows. Catalyzes the isomerization between 2-isopropylmalate and 3-isopropylmalate, via the formation of 2-isopropylmaleate. This is 3-isopropylmalate dehydratase large subunit from Prochlorococcus marinus (strain MIT 9515).